A 335-amino-acid chain; its full sequence is Phosphatidylglycerol--prolipoprotein diacylglyceryl transferase (335 aa).

3 helical membrane passes run 31-51 (IYWY…TYSL), 67-87 (YIFL…LAIG), and 100-120 (LAIQ…FPLI). Residue Arg163 participates in a 1,2-diacyl-sn-glycero-3-phospho-(1'-sn-glycerol) binding. The next 3 helical transmembrane spans lie at 213-233 (PLFL…YFGL), 235-255 (YIKQ…YGVI), and 277-297 (SLLL…APIL).

Belongs to the Lgt family.

The protein resides in the cell membrane. It catalyses the reaction L-cysteinyl-[prolipoprotein] + a 1,2-diacyl-sn-glycero-3-phospho-(1'-sn-glycerol) = an S-1,2-diacyl-sn-glyceryl-L-cysteinyl-[prolipoprotein] + sn-glycerol 1-phosphate + H(+). It functions in the pathway protein modification; lipoprotein biosynthesis (diacylglyceryl transfer). In terms of biological role, catalyzes the transfer of the diacylglyceryl group from phosphatidylglycerol to the sulfhydryl group of the N-terminal cysteine of a prolipoprotein, the first step in the formation of mature lipoproteins. This chain is Phosphatidylglycerol--prolipoprotein diacylglyceryl transferase, found in Ureaplasma urealyticum serovar 10 (strain ATCC 33699 / Western).